The chain runs to 259 residues: L-cystine import ATP-binding protein TcyN (259 aa).

Residues 2-239 (IEIKNIHKQF…TKKDRTRQFL (238 aa)) form the ABC transporter domain. 34–41 (GPSGSGKT) contacts ATP.

Belongs to the ABC transporter superfamily. L-cystine importer (TC 3.A.1.3.13) family. In terms of assembly, the complex is composed of two ATP-binding proteins (TcyN), two transmembrane proteins (TcyL and TcyM) and two solute-binding proteins (TcyJ and TcyK).

The protein localises to the cell membrane. Part of the ABC transporter complex TcyJKLMN involved in L-cystine import. Responsible for energy coupling to the transport system. Is also involved in cystathionine, djenkolate, and S-methylcysteine transport. This is L-cystine import ATP-binding protein TcyN (tcyN) from Bacillus subtilis (strain 168).